A 159-amino-acid polypeptide reads, in one-letter code: ATP synthase subunit b (159 aa).

A helical transmembrane segment spans residues 7–27 (VIFMTIINFCILVAILKHFFW).

It belongs to the ATPase B chain family. In terms of assembly, F-type ATPases have 2 components, F(1) - the catalytic core - and F(0) - the membrane proton channel. F(1) has five subunits: alpha(3), beta(3), gamma(1), delta(1), epsilon(1). F(0) has three main subunits: a(1), b(2) and c(10-14). The alpha and beta chains form an alternating ring which encloses part of the gamma chain. F(1) is attached to F(0) by a central stalk formed by the gamma and epsilon chains, while a peripheral stalk is formed by the delta and b chains.

Its subcellular location is the cell membrane. Functionally, f(1)F(0) ATP synthase produces ATP from ADP in the presence of a proton or sodium gradient. F-type ATPases consist of two structural domains, F(1) containing the extramembraneous catalytic core and F(0) containing the membrane proton channel, linked together by a central stalk and a peripheral stalk. During catalysis, ATP synthesis in the catalytic domain of F(1) is coupled via a rotary mechanism of the central stalk subunits to proton translocation. In terms of biological role, component of the F(0) channel, it forms part of the peripheral stalk, linking F(1) to F(0). The chain is ATP synthase subunit b from Clostridium botulinum (strain Alaska E43 / Type E3).